The chain runs to 306 residues: Aspartate carbamoyltransferase catalytic subunit (306 aa).

Residues R51 and T52 each coordinate carbamoyl phosphate. K80 serves as a coordination point for L-aspartate. 3 residues coordinate carbamoyl phosphate: R101, H129, and Q132. 2 residues coordinate L-aspartate: R162 and R224. L263 and P264 together coordinate carbamoyl phosphate.

Belongs to the aspartate/ornithine carbamoyltransferase superfamily. ATCase family. In terms of assembly, heterododecamer (2C3:3R2) of six catalytic PyrB chains organized as two trimers (C3), and six regulatory PyrI chains organized as three dimers (R2).

The enzyme catalyses carbamoyl phosphate + L-aspartate = N-carbamoyl-L-aspartate + phosphate + H(+). Its pathway is pyrimidine metabolism; UMP biosynthesis via de novo pathway; (S)-dihydroorotate from bicarbonate: step 2/3. In terms of biological role, catalyzes the condensation of carbamoyl phosphate and aspartate to form carbamoyl aspartate and inorganic phosphate, the committed step in the de novo pyrimidine nucleotide biosynthesis pathway. The protein is Aspartate carbamoyltransferase catalytic subunit of Parabacteroides distasonis (strain ATCC 8503 / DSM 20701 / CIP 104284 / JCM 5825 / NCTC 11152).